The chain runs to 201 residues: uncharacterized protein (201 aa).

This sequence belongs to the phosphatidylethanolamine-binding protein family.

This is an uncharacterized protein from Saccharomyces cerevisiae (strain ATCC 204508 / S288c) (Baker's yeast).